The chain runs to 784 residues: 1-phosphatidylinositol 4,5-bisphosphate phosphodiesterase delta-3-A (784 aa).

Residues 1 to 25 (MLGRKKNPETVQTESKSVESKTHDP) are disordered. Basic and acidic residues predominate over residues 16-25 (KSVESKTHDP). One can recognise a PH domain in the interval 38-149 (LLMLQGSKMM…WVRGIRTLKD (112 aa)). The interval 48-78 (KVRSQRWRKDRRLKLLEDCVTVWCESSKTSR) is substrate binding. EF-hand domains lie at 159–194 (KLDHWIRGYLRRADQNQDGKMSYDEVKHLLQLINID), 195–230 (LNEQYARTLFKKCDRSCDGRLDHVEIEEFCREMMRR), and 227–262 (MMRRPELDAVFRHYSGNGCVLTTLELRDFLGDQGED). Residues aspartate 172, asparagine 174, aspartate 176, lysine 178, glutamate 183, aspartate 208, serine 210, aspartate 212, arginine 214, and glutamate 219 each contribute to the Ca(2+) site. The 146-residue stretch at 313-458 (QDMSKPLAHY…LKGRILLKGK (146 aa)) folds into the PI-PLC X-box domain. Histidine 328 is a catalytic residue. Ca(2+) is bound by residues asparagine 329, glutamate 358, and aspartate 360. Histidine 373 is a catalytic residue. Glutamate 407 contacts Ca(2+). Substrate contacts are provided by lysine 456 and lysine 458. Residues 473–498 (FTNSSDEESVAGGNKKESKKDLARSA) form a disordered region. The segment covering 486-495 (NKKESKKDLA) has biased composition (basic and acidic residues). Positions 506-621 (LSDLVVYCQS…GYVLKPEFLC (116 aa)) constitute a PI-PLC Y-box domain. Substrate is bound by residues serine 534 and arginine 561. Residues 621–750 (CDPKSDFDPE…TGYRHVHLLK (130 aa)) enclose the C2 domain. Residues isoleucine 664, aspartate 666, asparagine 690, aspartate 719, and aspartate 721 each coordinate Ca(2+).

The cofactor is Ca(2+).

It is found in the membrane. It localises to the cytoplasm. The protein resides in the cleavage furrow. It catalyses the reaction a 1,2-diacyl-sn-glycero-3-phospho-(1D-myo-inositol-4,5-bisphosphate) + H2O = 1D-myo-inositol 1,4,5-trisphosphate + a 1,2-diacyl-sn-glycerol + H(+). Hydrolyzes the phosphatidylinositol 4,5-bisphosphate (PIP2) to generate 2 second messenger molecules diacylglycerol (DAG) and inositol 1,4,5-trisphosphate (IP3). DAG mediates the activation of protein kinase C (PKC), while IP3 releases Ca(2+) from intracellular stores. The chain is 1-phosphatidylinositol 4,5-bisphosphate phosphodiesterase delta-3-A (plcd3a) from Danio rerio (Zebrafish).